Reading from the N-terminus, the 472-residue chain is 3-isopropylmalate dehydratase large subunit (472 aa).

3 residues coordinate [4Fe-4S] cluster: Cys352, Cys413, and Cys416.

This sequence belongs to the aconitase/IPM isomerase family. LeuC type 1 subfamily. As to quaternary structure, heterodimer of LeuC and LeuD. It depends on [4Fe-4S] cluster as a cofactor.

The enzyme catalyses (2R,3S)-3-isopropylmalate = (2S)-2-isopropylmalate. Its pathway is amino-acid biosynthesis; L-leucine biosynthesis; L-leucine from 3-methyl-2-oxobutanoate: step 2/4. Its function is as follows. Catalyzes the isomerization between 2-isopropylmalate and 3-isopropylmalate, via the formation of 2-isopropylmaleate. This Pseudomonas fluorescens (strain ATCC BAA-477 / NRRL B-23932 / Pf-5) protein is 3-isopropylmalate dehydratase large subunit.